The following is a 1450-amino-acid chain: Collagen alpha-1(I) chain (1450 aa).

An N-terminal signal peptide occupies residues 1–22 (MFSFVDNRLLVLLAACVLLVRA). Residues 23 to 148 (LDQEDIESGL…PPGLGGNFAP (126 aa)) constitute a propeptide, N-terminal propeptide. Positions 31–90 (GLCHQEGTTYSDKDVWKPEPCVICVCDNGNIMCDDVTCGDYPVDCPNAEIPFGECCPVCP) constitute a VWFC domain. The tract at residues 97–1201 (YSEQTGVEGP…EPKSHGDGRY (1105 aa)) is disordered. The span at 106–116 (PKGEVGPKGDR) shows a compositional bias: basic and acidic residues. Pro residues predominate over residues 130-140 (LPGPPGPPGPP). Q149 is modified (pyrrolidone carboxylic acid). The residue at position 157 (K157) is an Allysine. Residues 166–181 (PMGPMGPRGPPGPSGS) are compositionally biased toward pro residues. Residues P176, P182, P194, P197, P212, P227, P242, and P248 each carry the 4-hydroxyproline modification. Residues 182-206 (PGPQGFQGPSGEPGEPGAAGALGPR) are compositionally biased toward low complexity. The span at 215-229 (NGDDGESGKPGRPGE) shows a compositional bias: basic and acidic residues. A 5-hydroxylysine; alternate modification is found at K251. O-linked (Gal...) hydroxylysine; alternate glycosylation is present at K251. The span at 266-292 (NGPAGPKGEPGNPGENGAPGQAGPRGL) shows a compositional bias: low complexity. Residues P275, P278, P284, P293, P299, P314, P320, P329, P332, P359, P362, P374, P380, P389, P395, P398, and P413 each carry the 4-hydroxyproline modification. Residues 317-331 (AGPPGPTGPTGPPGF) show a composition bias toward pro residues. Residues 352-374 (PQGARGEPGAPGPAGAAGPSGNP) show a composition bias toward low complexity. Over residues 378–387 (GQPGGKGATG) the composition is skewed to gly residues. A compositionally biased stretch (low complexity) spans 388 to 443 (SPGIAGAPGFPGARGAPGPQGPAGAPGPKGNNGEPGAQGNKGEPGAKGEPGPAGVQ). K416 carries the 5-hydroxylysine modification. P422, P437, P446, P461, P467, P476, and P482 each carry 4-hydroxyproline. The segment covering 471–480 (GERGGPGSRG) has biased composition (gly residues). The residue at position 491 (K491) is a 5-hydroxylysine. 16 positions are modified to 4-hydroxyproline: P494, P515, P521, P530, P533, P551, P569, P578, P590, P608, P626, P632, P644, P650, P656, and P668. Composition is skewed to low complexity over residues 568-578 (FPGPKGAAGEP) and 586-596 (VAGPPGATGAP). Residues 637–650 (PAGEAGKPGEQGAP) show a composition bias toward low complexity. Gly residues predominate over residues 669 to 678 (GERGGQGPAG). Low complexity predominate over residues 679 to 701 (AQGPRGSPGSPGNDGAKGEAGAA). Residues P689, P704, P710, P716, and P725 each carry the 4-hydroxyproline modification. The segment covering 702 to 711 (GAPGGRGPPG) has biased composition (gly residues). 5-hydroxylysine is present on K737. Residues P743, P758, P764, P785, P791, P794, P803, P809, P827, P836, and P845 each carry the 4-hydroxyproline modification. Residues 796 to 806 (PAGICGPPGAD) show a composition bias toward low complexity. Residues 817 to 869 (DAGPKGDAGAPGPAGPTGAPGPAGNVGAPGPKGTRGAAGPPGATGFPGAAGRL) show a composition bias toward low complexity. The residue at position 848 (K848) is a 5-hydroxylysine. 4-hydroxyproline occurs at positions 857 and 863. A 3-hydroxyproline modification is found at P871. Residues P872, P881, P884, P908, P914, P923, P932, P950, P962, P968, P983, P989, P995, P1004, and P1010 each carry the 4-hydroxyproline modification. The span at 917 to 943 (SGEKGSPGSDGPAGAPGIPGPQGIAGQ) shows a compositional bias: low complexity. Over residues 982–997 (PPGPSGPPGLGGPPGE) the composition is skewed to pro residues. The residue at position 1019 (K1019) is a 5-hydroxylysine. Positions 1028–1043 (SGPPGAPGAPGAPGPV) are enriched in pro residues. A 4-hydroxyproline mark is found at P1031, P1034, and P1037. Over residues 1064–1078 (AGPSGVRGAPGPAGA) the composition is skewed to low complexity. Positions 1079 to 1093 (RGDKGEAGEQGERGM) are enriched in basic and acidic residues. K1082 carries the post-translational modification 5-hydroxylysine. K1094 bears the 5-hydroxylysine; alternate mark. K1094 carries an O-linked (Gal...) hydroxylysine; alternate glycan. 2 positions are modified to 4-hydroxyproline: P1106 and P1109. A compositionally biased stretch (pro residues) spans 1120–1129 (PSGPAGPRGP). 2 positions are modified to 4-hydroxyproline: P1130 and P1145. The span at 1130-1145 (PGSSGSTGKDGVNGLP) shows a compositional bias: low complexity. The residue at position 1150 (P1150) is a 3-hydroxyproline. 4-hydroxyproline is present on P1151. Pro residues predominate over residues 1163-1178 (AGPPGPPGPPGPPGPP). P1165 carries the post-translational modification 3-hydroxyproline. 4-hydroxyproline is present on P1166. At P1168 the chain carries 3-hydroxyproline. P1169 is modified (4-hydroxyproline). The residue at position 1171 (P1171) is a 3-hydroxyproline. 3 positions are modified to 4-hydroxyproline: P1172, P1175, and P1178. K1194 is subject to Allysine. Residues 1205–1450 (DDANVVRDRD…GIDIGPVCFL (246 aa)) constitute a propeptide, C-terminal propeptide. The Fibrillar collagen NC1 domain maps to 1215 to 1450 (LEVDTTLKSL…GIDIGPVCFL (236 aa)). 3 disulfides stabilise this stretch: C1245-C1277, C1285-C1448, and C1356-C1401. The Ca(2+) site is built by D1263, N1265, Q1266, C1268, and D1271. N1351 carries an N-linked (GlcNAc...) asparagine glycan.

Belongs to the fibrillar collagen family. Trimers of one alpha 2(I) and two alpha 1(I) chains. Contains mostly 4-hydroxyproline. Proline residues at the third position of the tripeptide repeating unit (G-X-Y) are hydroxylated in some or all of the chains. In terms of processing, contains 3-hydroxyproline at a few sites. This modification occurs on the first proline residue in the sequence motif Gly-Pro-Hyp, where Hyp is 4-hydroxyproline. Post-translationally, lysine residues at the third position of the tripeptide repeating unit (G-X-Y) are 5-hydroxylated in some or all of the chains. O-glycosylated on hydroxylated lysine residues. The O-linked glycan consists of a Glc-Gal disaccharide.

It localises to the secreted. The protein resides in the extracellular space. Its subcellular location is the extracellular matrix. Its function is as follows. Type I collagen is a member of group I collagen (fibrillar forming collagen). The protein is Collagen alpha-1(I) chain (COL1A1) of Cynops pyrrhogaster (Japanese fire-bellied newt).